Reading from the N-terminus, the 556-residue chain is Sesquiterpene synthase 2 (556 aa).

Aspartate 309, aspartate 313, aspartate 453, and glutamate 461 together coordinate Mg(2+). Positions 309 to 313 (DDIYD) match the DDXXD motif motif.

The protein belongs to the terpene synthase family. Tpsa subfamily. Mg(2+) is required as a cofactor. Requires Mn(2+) as cofactor. As to expression, mostly expressed in roots and mature leaflets and, to a lower extent, in rachis and developing leaflets.

It catalyses the reaction (2E,6E)-farnesyl diphosphate = alpha-humulene + diphosphate. It carries out the reaction (2E,6E)-farnesyl diphosphate = alpha-selinene + diphosphate. The catalysed reaction is (2E,6E)-farnesyl diphosphate = delta-cadinene + diphosphate. The enzyme catalyses (2E,6E)-farnesyl diphosphate = (1S,2S,4R)-beta-elemene + diphosphate. It functions in the pathway secondary metabolite biosynthesis; terpenoid biosynthesis. Its function is as follows. Sesquiterpene synthase involved in the biosynthesis of volatile compounds known for their medicinal efficacy for treating enteritis, dysentery, itch and some cancers. Mediates the conversion of (2E,6E)-farnesyl diphosphate (FPP) into beta-elemene, alpha-humulene, delta-cadinene and alpha-selinene. The chain is Sesquiterpene synthase 2 from Toona sinensis (Chinese mahogany).